Reading from the N-terminus, the 572-residue chain is Phosphoenolpyruvate-protein phosphotransferase (572 aa).

Histidine 190 functions as the Tele-phosphohistidine intermediate in the catalytic mechanism. Phosphoenolpyruvate is bound by residues arginine 297 and arginine 333. Mg(2+) is bound by residues glutamate 427 and aspartate 451. Phosphoenolpyruvate is bound by residues asparagine 450 to aspartate 451 and arginine 461. The active-site Proton donor is cysteine 498.

Belongs to the PEP-utilizing enzyme family. As to quaternary structure, homodimer. Requires Mg(2+) as cofactor.

The protein localises to the cytoplasm. It carries out the reaction L-histidyl-[protein] + phosphoenolpyruvate = N(pros)-phospho-L-histidyl-[protein] + pyruvate. General (non sugar-specific) component of the phosphoenolpyruvate-dependent sugar phosphotransferase system (sugar PTS). This major carbohydrate active-transport system catalyzes the phosphorylation of incoming sugar substrates concomitantly with their translocation across the cell membrane. Enzyme I transfers the phosphoryl group from phosphoenolpyruvate (PEP) to the phosphoryl carrier protein (HPr). This is Phosphoenolpyruvate-protein phosphotransferase (ptsI) from Mycoplasma pneumoniae (strain ATCC 29342 / M129 / Subtype 1) (Mycoplasmoides pneumoniae).